The following is a 266-amino-acid chain: Trehalose-6-phosphate phosphatase (266 aa).

Asp20 functions as the Nucleophile in the catalytic mechanism. Mg(2+) contacts are provided by Asp20, Asp22, and Asp198. 20–22 (DLD) is a substrate binding site.

The protein belongs to the trehalose phosphatase family. It depends on Mg(2+) as a cofactor. Requires Mn(2+) as cofactor. Co(2+) serves as cofactor. Zn(2+) is required as a cofactor.

The enzyme catalyses alpha,alpha-trehalose 6-phosphate + H2O = alpha,alpha-trehalose + phosphate. Its pathway is glycan biosynthesis; trehalose biosynthesis. Its function is as follows. Removes the phosphate from trehalose 6-phosphate (Tre6P) to produce free trehalose. Also catalyzes the dephosphorylation of glucose-6-phosphate (Glu6P) and 2-deoxyglucose-6-phosphate (2dGlu6P). The polypeptide is Trehalose-6-phosphate phosphatase (otsB) (Escherichia coli (strain K12)).